Consider the following 315-residue polypeptide: Methionyl-tRNA formyltransferase (315 aa).

107–110 serves as a coordination point for (6S)-5,6,7,8-tetrahydrofolate; that stretch reads SLLP.

Belongs to the Fmt family.

The catalysed reaction is L-methionyl-tRNA(fMet) + (6R)-10-formyltetrahydrofolate = N-formyl-L-methionyl-tRNA(fMet) + (6S)-5,6,7,8-tetrahydrofolate + H(+). In terms of biological role, attaches a formyl group to the free amino group of methionyl-tRNA(fMet). The formyl group appears to play a dual role in the initiator identity of N-formylmethionyl-tRNA by promoting its recognition by IF2 and preventing the misappropriation of this tRNA by the elongation apparatus. This chain is Methionyl-tRNA formyltransferase, found in Borreliella afzelii (strain PKo) (Borrelia afzelii).